The following is a 293-amino-acid chain: Proline iminopeptidase (293 aa).

The 250-residue stretch at 28 to 277 folds into the AB hydrolase-1 domain; sequence PLVLLHGGPG…NCGHMSFVEK (250 aa). Residue Ser105 is the Nucleophile of the active site. Asp244 is an active-site residue. The Proton donor role is filled by His271.

The protein belongs to the peptidase S33 family.

The protein resides in the cell envelope. It catalyses the reaction Release of N-terminal proline from a peptide.. Functionally, releases the N-terminal proline from various substrates. This chain is Proline iminopeptidase, found in Lactobacillus crispatus (strain ST1).